The primary structure comprises 123 residues: Large ribosomal subunit protein bL12 (123 aa).

The protein belongs to the bacterial ribosomal protein bL12 family. As to quaternary structure, homodimer. Part of the ribosomal stalk of the 50S ribosomal subunit. Forms a multimeric L10(L12)X complex, where L10 forms an elongated spine to which 2 to 4 L12 dimers bind in a sequential fashion. Binds GTP-bound translation factors.

Forms part of the ribosomal stalk which helps the ribosome interact with GTP-bound translation factors. Is thus essential for accurate translation. This Rickettsia bellii (strain OSU 85-389) protein is Large ribosomal subunit protein bL12.